A 138-amino-acid chain; its full sequence is Large ribosomal subunit protein uL14 (138 aa).

This sequence belongs to the universal ribosomal protein uL14 family. As to quaternary structure, part of the 50S ribosomal subunit. Forms a cluster with proteins L3 and L24e, part of which may contact the 16S rRNA in 2 intersubunit bridges.

In terms of biological role, binds to 23S rRNA. Forms part of two intersubunit bridges in the 70S ribosome. This is Large ribosomal subunit protein uL14 from Metallosphaera sedula (strain ATCC 51363 / DSM 5348 / JCM 9185 / NBRC 15509 / TH2).